The following is a 293-amino-acid chain: Bifunctional protein FolD (293 aa).

NADP(+) is bound by residues 164 to 166, serine 193, and threonine 234; that span reads GRS.

Belongs to the tetrahydrofolate dehydrogenase/cyclohydrolase family. In terms of assembly, homodimer.

The catalysed reaction is (6R)-5,10-methylene-5,6,7,8-tetrahydrofolate + NADP(+) = (6R)-5,10-methenyltetrahydrofolate + NADPH. The enzyme catalyses (6R)-5,10-methenyltetrahydrofolate + H2O = (6R)-10-formyltetrahydrofolate + H(+). Its pathway is one-carbon metabolism; tetrahydrofolate interconversion. Catalyzes the oxidation of 5,10-methylenetetrahydrofolate to 5,10-methenyltetrahydrofolate and then the hydrolysis of 5,10-methenyltetrahydrofolate to 10-formyltetrahydrofolate. The chain is Bifunctional protein FolD from Phocaeicola vulgatus (strain ATCC 8482 / DSM 1447 / JCM 5826 / CCUG 4940 / NBRC 14291 / NCTC 11154) (Bacteroides vulgatus).